A 323-amino-acid chain; its full sequence is MTAAPHTAPRAVCLLGPTASGKTAAALALAERWPVEIISMDSALVYRDMDIGTAKPSRAEQAIAPHHLIDIIDPLDAYSAAQFATDAQALIEAIRARGRLPLIVGGTMLYYKALTQGLSDLPGADPAIRAEIDAEAARDGWPALHAKLAQVDPVTAARLHATDAQRIQRALELYRLTGQPMSALLAREAGAAAFHRHEAAAAYLSIALEPADRAVLHARIAQRFDAMLAGGLLDEVEALRRRGDLSPVLPSIRCVGYRQAWAYLDGEIDMATLREQGIAATRQLCKRQITWLRSTPERRVVDCLAPDYVDQVARLVRNALETP.

16–23 is an ATP binding site; sequence GPTASGKT. 18 to 23 provides a ligand contact to substrate; that stretch reads TASGKT. Interaction with substrate tRNA stretches follow at residues 41–44, 165–169, 253–258, and 286–293; these read DSAL, QRIQR, RCVGYR, and KRQITWLR.

It belongs to the IPP transferase family. In terms of assembly, monomer. Requires Mg(2+) as cofactor.

It carries out the reaction adenosine(37) in tRNA + dimethylallyl diphosphate = N(6)-dimethylallyladenosine(37) in tRNA + diphosphate. Catalyzes the transfer of a dimethylallyl group onto the adenine at position 37 in tRNAs that read codons beginning with uridine, leading to the formation of N6-(dimethylallyl)adenosine (i(6)A). In Ralstonia nicotianae (strain ATCC BAA-1114 / GMI1000) (Ralstonia solanacearum), this protein is tRNA dimethylallyltransferase.